Consider the following 369-residue polypeptide: Protein-glutamate methylesterase/protein-glutamine glutaminase of group 3 operon (369 aa).

The Response regulatory domain maps to 11-128 (RVLIVDDSAA…DLERQEASIR (118 aa)). The residue at position 62 (aspartate 62) is a 4-aspartylphosphate. The interval 136 to 168 (ATETTRRRSQPEPRPLAPGPKLTADEILPARPP) is disordered. The CheB-type methylesterase domain occupies 170 to 358 (PVPETMPVVC…LDRLAARIME (189 aa)). Residues serine 183, histidine 209, and aspartate 305 contribute to the active site.

This sequence belongs to the CheB family. In terms of processing, phosphorylated in vitro by CheA2, but not by CheA1. Phosphorylation of the N-terminal regulatory domain activates the methylesterase activity.

The protein resides in the cytoplasm. It catalyses the reaction [protein]-L-glutamate 5-O-methyl ester + H2O = L-glutamyl-[protein] + methanol + H(+). The catalysed reaction is L-glutaminyl-[protein] + H2O = L-glutamyl-[protein] + NH4(+). Its function is as follows. Involved in chemotaxis. Part of a chemotaxis signal transduction system that modulates chemotaxis in response to various stimuli. Catalyzes the demethylation of specific methylglutamate residues introduced into the chemoreceptors (methyl-accepting chemotaxis proteins or MCP) by CheR. Also mediates the irreversible deamidation of specific glutamine residues to glutamic acid. This chain is Protein-glutamate methylesterase/protein-glutamine glutaminase of group 3 operon (cheB3), found in Cereibacter sphaeroides (Rhodobacter sphaeroides).